Reading from the N-terminus, the 267-residue chain is Formamidopyrimidine-DNA glycosylase (267 aa).

Pro2 acts as the Schiff-base intermediate with DNA in catalysis. Glu3 serves as the catalytic Proton donor. Lys58 acts as the Proton donor; for beta-elimination activity in catalysis. DNA is bound by residues His91, Arg110, and Arg152. The segment at 233–267 (DVYGRGTDACTRCGGALEEIRLGNRSTVFCPRCQT) adopts an FPG-type zinc-finger fold. Residue Arg257 is the Proton donor; for delta-elimination activity of the active site.

The protein belongs to the FPG family. As to quaternary structure, monomer. It depends on Zn(2+) as a cofactor.

It carries out the reaction Hydrolysis of DNA containing ring-opened 7-methylguanine residues, releasing 2,6-diamino-4-hydroxy-5-(N-methyl)formamidopyrimidine.. It catalyses the reaction 2'-deoxyribonucleotide-(2'-deoxyribose 5'-phosphate)-2'-deoxyribonucleotide-DNA = a 3'-end 2'-deoxyribonucleotide-(2,3-dehydro-2,3-deoxyribose 5'-phosphate)-DNA + a 5'-end 5'-phospho-2'-deoxyribonucleoside-DNA + H(+). Its function is as follows. Involved in base excision repair of DNA damaged by oxidation or by mutagenic agents. Acts as a DNA glycosylase that recognizes and removes damaged bases. Has a preference for oxidized purines, such as 7,8-dihydro-8-oxoguanine (8-oxoG). Has AP (apurinic/apyrimidinic) lyase activity and introduces nicks in the DNA strand. Cleaves the DNA backbone by beta-delta elimination to generate a single-strand break at the site of the removed base with both 3'- and 5'-phosphates. In Geobacter metallireducens (strain ATCC 53774 / DSM 7210 / GS-15), this protein is Formamidopyrimidine-DNA glycosylase.